Consider the following 398-residue polypeptide: Tyrosine--tRNA ligase (398 aa).

The 'HIGH' region signature appears at 42-51 (PTAPDLHLGH). The 'KMSKS' region motif lies at 226 to 230 (KMSKS). Lysine 229 is an ATP binding site. The S4 RNA-binding domain occupies 341-397 (AFLEAAGLVKSRGEAKRLIKEGALSVDGVRCDDANSPLASGEYVIKLGKKRFLRLTV).

The protein belongs to the class-I aminoacyl-tRNA synthetase family. TyrS type 2 subfamily. Homodimer.

Its subcellular location is the cytoplasm. It catalyses the reaction tRNA(Tyr) + L-tyrosine + ATP = L-tyrosyl-tRNA(Tyr) + AMP + diphosphate + H(+). In terms of biological role, catalyzes the attachment of tyrosine to tRNA(Tyr) in a two-step reaction: tyrosine is first activated by ATP to form Tyr-AMP and then transferred to the acceptor end of tRNA(Tyr). The polypeptide is Tyrosine--tRNA ligase (Nitratidesulfovibrio vulgaris (strain ATCC 29579 / DSM 644 / CCUG 34227 / NCIMB 8303 / VKM B-1760 / Hildenborough) (Desulfovibrio vulgaris)).